The sequence spans 380 residues: Flap endonuclease 1 (380 aa).

The N-domain stretch occupies residues 1-104; that stretch reads MGIKGLSQLI…GELTKRAEKR (104 aa). D34 is a Mg(2+) binding site. Residues R47 and R70 each contribute to the DNA site. Positions 86, 158, 160, 179, and 181 each coordinate Mg(2+). Positions 122-253 are I-domain; it reads DIDKFNRRLV…KKAVELINKH (132 aa). Residue E158 coordinates DNA. Residues G231 and D233 each contribute to the DNA site. D233 is a Mg(2+) binding site. The tract at residues 336–344 is interaction with PCNA; the sequence is TQGRLDSFF. The tract at residues 342 to 380 is disordered; the sequence is SFFKVLPSTPNPKRKIEDKKTPASKKAKTTGGKPGRKPK. Residues 363–380 are compositionally biased toward basic residues; sequence PASKKAKTTGGKPGRKPK.

Belongs to the XPG/RAD2 endonuclease family. FEN1 subfamily. Interacts with PCNA. Three molecules of FEN1 bind to one PCNA trimer with each molecule binding to one PCNA monomer. PCNA stimulates the nuclease activity without altering cleavage specificity. Mg(2+) is required as a cofactor. In terms of processing, phosphorylated. Phosphorylation upon DNA damage induces relocalization to the nuclear plasma.

The protein resides in the nucleus. The protein localises to the nucleolus. It is found in the nucleoplasm. It localises to the mitochondrion. Its function is as follows. Structure-specific nuclease with 5'-flap endonuclease and 5'-3' exonuclease activities involved in DNA replication and repair. During DNA replication, cleaves the 5'-overhanging flap structure that is generated by displacement synthesis when DNA polymerase encounters the 5'-end of a downstream Okazaki fragment. It enters the flap from the 5'-end and then tracks to cleave the flap base, leaving a nick for ligation. Also involved in the long patch base excision repair (LP-BER) pathway, by cleaving within the apurinic/apyrimidinic (AP) site-terminated flap. Acts as a genome stabilization factor that prevents flaps from equilibrating into structures that lead to duplications and deletions. Also possesses 5'-3' exonuclease activity on nicked or gapped double-stranded DNA, and exhibits RNase H activity. Also involved in replication and repair of rDNA and in repairing mitochondrial DNA. This Aedes aegypti (Yellowfever mosquito) protein is Flap endonuclease 1.